The primary structure comprises 72 residues: Alpha-elapitoxin-Djk2a (72 aa).

5 disulfides stabilise this stretch: Cys-3-Cys-21, Cys-14-Cys-42, Cys-27-Cys-31, Cys-46-Cys-57, and Cys-58-Cys-63.

It belongs to the three-finger toxin family. Long-chain subfamily. Type II alpha-neurotoxin sub-subfamily. Expressed by the venom gland.

Its subcellular location is the secreted. Binds with high affinity to muscular (alpha-1/CHRNA1) and neuronal (alpha-7/CHRNA7) nicotinic acetylcholine receptor (nAChR) and inhibits acetylcholine from binding to the receptor, thereby impairing neuromuscular and neuronal transmission. The sequence is that of Alpha-elapitoxin-Djk2a from Dendroaspis jamesoni kaimosae (Eastern Jameson's mamba).